The following is a 258-amino-acid chain: Global transcriptional regulator CodY (258 aa).

Residues 1-156 (MSTLLSKTRR…SATIVGMELL (156 aa)) are GAF domain. Residues 204–223 (ASKIADKVGITRSVIVNALR) constitute a DNA-binding region (H-T-H motif).

This sequence belongs to the CodY family.

It is found in the cytoplasm. Its function is as follows. DNA-binding global transcriptional regulator which is involved in the adaptive response to starvation and acts by directly or indirectly controlling the expression of numerous genes in response to nutrient availability. During rapid exponential growth, CodY is highly active and represses genes whose products allow adaptation to nutrient depletion. The sequence is that of Global transcriptional regulator CodY from Clostridium perfringens (strain SM101 / Type A).